Reading from the N-terminus, the 79-residue chain is Small ribosomal subunit protein bS16c (79 aa).

Belongs to the bacterial ribosomal protein bS16 family.

The protein localises to the plastid. It is found in the chloroplast. In Trieres chinensis (Marine centric diatom), this protein is Small ribosomal subunit protein bS16c.